We begin with the raw amino-acid sequence, 213 residues long: High frequency lysogenization protein HflD (213 aa).

Residues 99 to 126 (LSSAKGALDTLGNRINGLQRQLEHFDLQ) adopt a coiled-coil conformation.

The protein belongs to the HflD family. In terms of assembly, interacts with CII protein from phage lambda.

The protein localises to the cytoplasm. It is found in the cell inner membrane. Functionally, negative regulator of phage lambda lysogenization. Contributes to the degradation of the phage regulatory protein CII. Acts probably by holding CII on the membrane surface, away from the target promoters, but close to the FtsH protease. This Escherichia coli O157:H7 protein is High frequency lysogenization protein HflD.